Reading from the N-terminus, the 137-residue chain is Small ribosomal subunit protein uS11 (137 aa).

The disordered stretch occupies residues 116-137 (EDVTPIPHDGTRPKGGRRGRRV).

Belongs to the universal ribosomal protein uS11 family. Part of the 30S ribosomal subunit.

Its function is as follows. Located on the platform of the 30S subunit. This Pyrococcus abyssi (strain GE5 / Orsay) protein is Small ribosomal subunit protein uS11.